A 103-amino-acid polypeptide reads, in one-letter code: A-type ATP synthase subunit F (103 aa).

This sequence belongs to the V-ATPase F subunit family. As to quaternary structure, has multiple subunits with at least A(3), B(3), C, D, E, F, H, I and proteolipid K(x).

It is found in the cell membrane. Its function is as follows. Component of the A-type ATP synthase that produces ATP from ADP in the presence of a proton gradient across the membrane. The protein is A-type ATP synthase subunit F of Pyrococcus abyssi (strain GE5 / Orsay).